Here is a 316-residue protein sequence, read N- to C-terminus: Ribosomal RNA small subunit methyltransferase H (316 aa).

S-adenosyl-L-methionine-binding positions include 35 to 37 (AGH), D55, F84, D105, and Q112.

Belongs to the methyltransferase superfamily. RsmH family.

The protein resides in the cytoplasm. It carries out the reaction cytidine(1402) in 16S rRNA + S-adenosyl-L-methionine = N(4)-methylcytidine(1402) in 16S rRNA + S-adenosyl-L-homocysteine + H(+). Its function is as follows. Specifically methylates the N4 position of cytidine in position 1402 (C1402) of 16S rRNA. This is Ribosomal RNA small subunit methyltransferase H from Streptococcus pneumoniae (strain P1031).